The primary structure comprises 311 residues: MLSLQTIAKMAVATNTYSKYHYPILKVFGLWWKNSTLNGPIKICNHCNNIMVGEYPMCYNHGMSLDIALIRAVKERNISLVQLFTEWGGNIDYGALCANTPSMQRLCKSLGAKPPKGRMYMDALIHLSDTLNDNDLIRGYEIFDDNSVLDCVNLIRLKIMLTLKARIPLMEQLDQIALKQLLQRYWYAMAVQHNLTTAIHYFDNHIPNIKPFSLRCALYFNDPFKIHDACRTVNMDPNEMMNIACQQDLNFQSIYYSYILGADINQAMLMSLKYGNLSNMWFCIDLGADAFKEAGALAGKKKKSVTAHIRS.

Belongs to the asfivirus MGF 360 family.

Functionally, plays a role in virus cell tropism, and may be required for efficient virus replication in macrophages. The protein is Protein MGF 360-16R of African swine fever virus (strain Badajoz 1971 Vero-adapted) (Ba71V).